Consider the following 153-residue polypeptide: Prostaglandin E synthase (153 aa).

Topologically, residues 1–13 (MPSPGLVMESGQV) are lumenal. The helical transmembrane segment at 14–42 (LPAFLLCSTLLVIKMYAVAVITGQMRLRK) threads the bilayer. Arg-39 serves as a coordination point for glutathione. The Cytoplasmic segment spans residues 43–61 (KAFANPEDALKRGGLQYYR). A helical membrane pass occupies residues 62–91 (SDPDVERCLRAHRNDMETIYPFLFLGFVYS). Glutathione is bound at residue 74-78 (RNDME). The Lumenal portion of the chain corresponds to 92-96 (FLGPN). Residues 97–120 (PLIAWIHFLVVLTGRVVHTVAYLG) form a helical membrane-spanning segment. Glutathione contacts are provided by His-114 and Tyr-118. Residues 121–124 (KLNP) lie on the Cytoplasmic side of the membrane. A helical transmembrane segment spans residues 125–153 (RLRSGAYVLAQFSCFSMALQILWEVAHHL). 127 to 131 (RSGAY) provides a ligand contact to glutathione.

The protein belongs to the MAPEG family. As to quaternary structure, homotrimer. Glutathione serves as cofactor.

The protein resides in the membrane. Its subcellular location is the cytoplasm. The protein localises to the perinuclear region. The enzyme catalyses prostaglandin H2 = prostaglandin E2. The catalysed reaction is 2-glyceryl-prostaglandin H2 = 2-glyceryl-prostaglandin E2. It carries out the reaction prostaglandin G2 = (15S)-15-hydroperoxy-prostaglandin E2. It catalyses the reaction 1-chloro-2,4-dinitrobenzene + glutathione = 2,4-dinitrophenyl-S-glutathione + chloride + H(+). The enzyme catalyses (5S)-hydroperoxy-(6E,8Z,11Z,14Z)-eicosatetraenoate + 2 glutathione = (5S)-hydroxy-(6E,8Z,11Z,14Z)-eicosatetraenoate + glutathione disulfide + H2O. Its pathway is lipid metabolism; prostaglandin biosynthesis. With respect to regulation, activity is increased markedly in macrophages and osteoblasts following pro-inflammatory stimuli. In terms of biological role, terminal enzyme of the cyclooxygenase (COX)-2-mediated prostaglandin E2 (PGE2) biosynthetic pathway. Catalyzes the glutathione-dependent oxidoreduction of prostaglandin endoperoxide H2 (PGH2) to prostaglandin E2 (PGE2) in response to inflammatory stimuli. Plays a key role in inflammation response, fever and pain. Also catalyzes the oxidoreduction of endocannabinoids into prostaglandin glycerol esters and PGG2 into 15-hydroperoxy-PGE2. In addition, displays low glutathione transferase and glutathione-dependent peroxidase activities, toward 1-chloro-2,4-dinitrobenzene and 5-hydroperoxyicosatetraenoic acid (5-HPETE), respectively. This chain is Prostaglandin E synthase (Ptges), found in Mus musculus (Mouse).